The sequence spans 126 residues: uncharacterized protein (126 aa).

This is an uncharacterized protein from Agrobacterium tumefaciens (strain 15955).